We begin with the raw amino-acid sequence, 477 residues long: Glycogen synthase (477 aa).

Lys15 serves as a coordination point for ADP-alpha-D-glucose.

It belongs to the glycosyltransferase 1 family. Bacterial/plant glycogen synthase subfamily.

It carries out the reaction [(1-&gt;4)-alpha-D-glucosyl](n) + ADP-alpha-D-glucose = [(1-&gt;4)-alpha-D-glucosyl](n+1) + ADP + H(+). Its pathway is glycan biosynthesis; glycogen biosynthesis. In terms of biological role, synthesizes alpha-1,4-glucan chains using ADP-glucose. In Shigella boydii serotype 4 (strain Sb227), this protein is Glycogen synthase.